We begin with the raw amino-acid sequence, 288 residues long: ATP synthase gamma chain (288 aa).

It belongs to the ATPase gamma chain family. In terms of assembly, F-type ATPases have 2 components, CF(1) - the catalytic core - and CF(0) - the membrane proton channel. CF(1) has five subunits: alpha(3), beta(3), gamma(1), delta(1), epsilon(1). CF(0) has three main subunits: a, b and c.

The protein resides in the cell inner membrane. Its function is as follows. Produces ATP from ADP in the presence of a proton gradient across the membrane. The gamma chain is believed to be important in regulating ATPase activity and the flow of protons through the CF(0) complex. This Vibrio vulnificus (strain CMCP6) protein is ATP synthase gamma chain.